The chain runs to 213 residues: N-(5'-phosphoribosyl)anthranilate isomerase (213 aa).

Belongs to the TrpF family.

It catalyses the reaction N-(5-phospho-beta-D-ribosyl)anthranilate = 1-(2-carboxyphenylamino)-1-deoxy-D-ribulose 5-phosphate. Its pathway is amino-acid biosynthesis; L-tryptophan biosynthesis; L-tryptophan from chorismate: step 3/5. This Hahella chejuensis (strain KCTC 2396) protein is N-(5'-phosphoribosyl)anthranilate isomerase.